A 307-amino-acid polypeptide reads, in one-letter code: Ribosomal RNA small subunit methyltransferase H (307 aa).

S-adenosyl-L-methionine is bound by residues glycine 32 to histidine 34, aspartate 52, phenylalanine 78, aspartate 100, and glutamine 107.

Belongs to the methyltransferase superfamily. RsmH family.

The protein resides in the cytoplasm. It catalyses the reaction cytidine(1402) in 16S rRNA + S-adenosyl-L-methionine = N(4)-methylcytidine(1402) in 16S rRNA + S-adenosyl-L-homocysteine + H(+). Functionally, specifically methylates the N4 position of cytidine in position 1402 (C1402) of 16S rRNA. The chain is Ribosomal RNA small subunit methyltransferase H from Coxiella burnetii (strain CbuG_Q212) (Coxiella burnetii (strain Q212)).